Consider the following 115-residue polypeptide: Nucleoid-associated protein NATL1_00191 (115 aa).

The tract at residues 89 to 115 (STSTMKERMEDLTGGFKLNLPGMGEES) is disordered.

Belongs to the YbaB/EbfC family. As to quaternary structure, homodimer.

It is found in the cytoplasm. The protein localises to the nucleoid. Binds to DNA and alters its conformation. May be involved in regulation of gene expression, nucleoid organization and DNA protection. The protein is Nucleoid-associated protein NATL1_00191 of Prochlorococcus marinus (strain NATL1A).